The following is a 961-amino-acid chain: Translation initiation factor IF-2 (961 aa).

The span at P146 to H158 shows a compositional bias: polar residues. The interval P146–P373 is disordered. Basic and acidic residues predominate over residues N163–S176. Residues N177–N187 are compositionally biased toward low complexity. Residues S230–Q239 are compositionally biased toward basic and acidic residues. Composition is skewed to polar residues over residues E241–H285 and Y301–I310. Residues N355–K364 are compositionally biased toward basic residues. In terms of domain architecture, tr-type G spans R460–E627. The interval G469–T476 is G1. GTP is bound at residue G469–T476. Positions G494–H498 are G2. The G3 stretch occupies residues D515–G518. Residues D515–H519 and N569–D572 contribute to the GTP site. A G4 region spans residues N569–D572. The interval S605–K607 is G5.

Belongs to the TRAFAC class translation factor GTPase superfamily. Classic translation factor GTPase family. IF-2 subfamily.

Its subcellular location is the cytoplasm. One of the essential components for the initiation of protein synthesis. Protects formylmethionyl-tRNA from spontaneous hydrolysis and promotes its binding to the 30S ribosomal subunits. Also involved in the hydrolysis of GTP during the formation of the 70S ribosomal complex. In Lawsonia intracellularis (strain PHE/MN1-00), this protein is Translation initiation factor IF-2.